The sequence spans 207 residues: Antitermination protein Q (207 aa).

Residues 1–28 (MRLESVAKFHSPKSPMMSDSPRATASDS) are disordered. C118, C121, C144, and C147 together coordinate Zn(2+). A zinc finger spans residues 118 to 147 (CRNCHGTGRAVDIAKTEQWGRVVEKECGRC). A DNA-binding region spans residues 171-192 (LTQPTWSRTVKPLYDALVVQCH).

The protein belongs to the phage antitermination Q type 2 family. As to quaternary structure, interacts with host RPOB (via flap domain); this interaction renders host RNAP resistant to transcription pausing and allows it to read through termination signals. Interacts with host RNA polymerase sigma factor RPOD (via domain-4). Interacts with host NusA (via N-terminus and AR2 domain); this interaction releases the autoinhibition of NusA.

Mediates the switch from middle to viral late gene expression by associating with host RNA polymerase (RNAP) so that the latter can read without pausing and through transcription terminators preceding late genes. Competes with host factor sigma 70 for binding to RPOB, the beta-subunit of host RNAP. To join the elongation complex, binds a specific DNA Q-binding element (QBE) and interacts with RNAP that is paused during early elongation. Participates in the lysis-lysogeny decision by activating the expression of the late lytic genes. This is Antitermination protein Q (23) from Salmonella typhimurium.